Here is a 334-residue protein sequence, read N- to C-terminus: Ribosomal RNA small subunit methyltransferase H (334 aa).

Residues 34–36, aspartate 52, alanine 87, aspartate 100, and glutamine 107 contribute to the S-adenosyl-L-methionine site; that span reads GGY.

The protein belongs to the methyltransferase superfamily. RsmH family.

It is found in the cytoplasm. The catalysed reaction is cytidine(1402) in 16S rRNA + S-adenosyl-L-methionine = N(4)-methylcytidine(1402) in 16S rRNA + S-adenosyl-L-homocysteine + H(+). Specifically methylates the N4 position of cytidine in position 1402 (C1402) of 16S rRNA. This Maricaulis maris (strain MCS10) (Caulobacter maris) protein is Ribosomal RNA small subunit methyltransferase H.